The chain runs to 509 residues: Lysine--tRNA ligase (509 aa).

The Mg(2+) site is built by Glu395 and Glu402.

This sequence belongs to the class-II aminoacyl-tRNA synthetase family. In terms of assembly, homodimer. Requires Mg(2+) as cofactor.

The protein localises to the cytoplasm. It carries out the reaction tRNA(Lys) + L-lysine + ATP = L-lysyl-tRNA(Lys) + AMP + diphosphate. This is Lysine--tRNA ligase from Fervidobacterium nodosum (strain ATCC 35602 / DSM 5306 / Rt17-B1).